A 308-amino-acid polypeptide reads, in one-letter code: tRNA dimethylallyltransferase (308 aa).

10–17 (GPTASGKT) is a binding site for ATP. 12–17 (TASGKT) contacts substrate. Interaction with substrate tRNA regions lie at residues 35–38 (DSSL) and 159–163 (QRIFR).

It belongs to the IPP transferase family. Monomer. Mg(2+) is required as a cofactor.

It carries out the reaction adenosine(37) in tRNA + dimethylallyl diphosphate = N(6)-dimethylallyladenosine(37) in tRNA + diphosphate. Functionally, catalyzes the transfer of a dimethylallyl group onto the adenine at position 37 in tRNAs that read codons beginning with uridine, leading to the formation of N6-(dimethylallyl)adenosine (i(6)A). This Francisella philomiragia subsp. philomiragia (strain ATCC 25017 / CCUG 19701 / FSC 153 / O#319-036) protein is tRNA dimethylallyltransferase.